Reading from the N-terminus, the 153-residue chain is Ribosome maturation factor RimP (153 aa).

This sequence belongs to the RimP family.

It localises to the cytoplasm. Required for maturation of 30S ribosomal subunits. The polypeptide is Ribosome maturation factor RimP (Marinobacter nauticus (strain ATCC 700491 / DSM 11845 / VT8) (Marinobacter aquaeolei)).